We begin with the raw amino-acid sequence, 227 residues long: Cytidylate kinase (227 aa).

Residue 10–18 participates in ATP binding; it reads GPSGSGKGT.

It belongs to the cytidylate kinase family. Type 1 subfamily.

It is found in the cytoplasm. It catalyses the reaction CMP + ATP = CDP + ADP. It carries out the reaction dCMP + ATP = dCDP + ADP. The protein is Cytidylate kinase of Acinetobacter baylyi (strain ATCC 33305 / BD413 / ADP1).